Here is a 356-residue protein sequence, read N- to C-terminus: Glutamine synthetase cytosolic isozyme 2 (356 aa).

A GS beta-grasp domain is found at Ile19–Gly99. One can recognise a GS catalytic domain in the interval Lys106–Pro356.

The protein belongs to the glutamine synthetase family. In terms of assembly, homooctamer.

The protein resides in the cytoplasm. The catalysed reaction is L-glutamate + NH4(+) + ATP = L-glutamine + ADP + phosphate + H(+). The sequence is that of Glutamine synthetase cytosolic isozyme 2 (GS1-2) from Vitis vinifera (Grape).